A 519-amino-acid chain; its full sequence is Chromobox protein homolog 2 (519 aa).

A Chromo domain is found at 12 to 70 (FAAECILSKRLRKGKLEYLVKWRGWSSKHNSWEPEENILDPRLLLAFQKKEHEKEVQNR). Residues 60-69 (KKEHEKEVQN) show a composition bias toward basic and acidic residues. Residues 60–180 (KKEHEKEVQN…PPEQKAARRP (121 aa)) form a disordered region. Over residues 70–84 (RKRGKRPRGRPRKHT) the composition is skewed to basic residues. Positions 75–87 (RPRGRPRKHTVTS) form a DNA-binding region, a.T hook. Positions 103–119 (KSKSSSSSSSSTSSSSS) are enriched in low complexity. Positions 129–141 (LDSKRGPRGRETH) are enriched in basic and acidic residues. Residues lysine 147 and lysine 154 each participate in a glycyl lysine isopeptide (Lys-Gly) (interchain with G-Cter in SUMO2) cross-link. A Nuclear localization signal motif is present at residues 164–169 (KRGRKP). Asymmetric dimethylarginine; alternate is present on arginine 248. Position 248 is an omega-N-methylarginine; alternate (arginine 248). Disordered stretches follow at residues 295 to 336 (QKGG…LAPT) and 367 to 464 (AIPA…TSLP). Serine 303 carries the phosphoserine modification. 2 stretches are compositionally biased toward polar residues: residues 321 to 336 (QRGN…LAPT) and 384 to 395 (TGANMTNAPTDN). Over residues 453–464 (SSDSDPDSTSLP) the composition is skewed to low complexity.

Component of a PRC1-like complex. The composition of the PRC1 complex may differ between the PRC1 complex in pluripotent embryonic stem cells containing RNF2, CBX7 and PCGF2, and the PRC1 complex in differentiating cells containing RNF2, CBX2, CBX4 and BMI1. Interacts with RING1/RNF2. Interacts (via chromodomain) with histone H3K9Me3 and H3K27me3. May interact with H3C15 and H3C1. In terms of tissue distribution, expressed in embryoid bodies.

The protein localises to the nucleus speckle. It is found in the chromosome. In terms of biological role, component of a Polycomb group (PcG) multiprotein PRC1-like complex, a complex class required to maintain the transcriptionally repressive state of many genes, including Hox genes, throughout development. PcG PRC1 complex acts via chromatin remodeling and modification of histones; it mediates monoubiquitination of histone H2A 'Lys-119', rendering chromatin heritably changed in its expressibility. Binds to histone H3 trimethylated at 'Lys-9' (H3K9me3) or at 'Lys-27' (H3K27me3). Plays a role in the lineage differentiation of the germ layers in embryonic development. Involved in sexual development, acting as activator of NR5A1 expression. The chain is Chromobox protein homolog 2 (Cbx2) from Mus musculus (Mouse).